A 601-amino-acid polypeptide reads, in one-letter code: Somatic embryogenesis receptor kinase 5 (601 aa).

Residues 1 to 24 (MEHGSSRGFIWLILFLDFVSRVTG) form the signal peptide. At 25–215 (KTQVDALIAL…SPSPSPSGTS (191 aa)) the chain is on the extracellular side. N-linked (GlcNAc...) asparagine glycans are attached at residues Asn-52, Asn-81, Asn-105, Asn-129, Asn-151, and Asn-184. LRR repeat units lie at residues 71–94 (SVTR…AQLP), 95–118 (NLQY…GDLM), 119–141 (ELVS…LGKL), 143–165 (KLRF…LTAL), and 166–188 (PLDV…GSFS). A helical transmembrane segment spans residues 216–236 (AAIVVGVAAGAALLFALAWWL). Residues 237 to 601 (RRKLQGHFLD…IENDYPSGPR (365 aa)) lie on the Cytoplasmic side of the membrane. Residue Thr-272 is modified to Phosphothreonine. The 298-residue stretch at 275–572 (FSKRNVLGKG…KEEMPIHDFN (298 aa)) folds into the Protein kinase domain. 281–289 (LGKGRFGIL) contributes to the ATP binding site. Thr-298 carries the phosphothreonine modification. Lys-303 serves as a coordination point for ATP. 2 positions are modified to phosphoserine: Ser-356 and Ser-359. Asp-402 acts as the Proton acceptor in catalysis. Thr-435, Thr-436, and Thr-441 each carry phosphothreonine. Phosphotyrosine is present on Tyr-449. Ser-451 is subject to Phosphoserine. Thr-452 carries the phosphothreonine modification. Phosphoserine is present on residues Ser-456 and Ser-506. At Thr-532 the chain carries Phosphothreonine.

It belongs to the protein kinase superfamily. Ser/Thr protein kinase family. As to quaternary structure, interacts with TMK4/BARK1. In terms of processing, autophosphorylated.

It localises to the cell membrane. The catalysed reaction is L-seryl-[protein] + ATP = O-phospho-L-seryl-[protein] + ADP + H(+). The enzyme catalyses L-threonyl-[protein] + ATP = O-phospho-L-threonyl-[protein] + ADP + H(+). Serine/threonine-kinase of unknown function. The polypeptide is Somatic embryogenesis receptor kinase 5 (SERK5) (Arabidopsis thaliana (Mouse-ear cress)).